A 487-amino-acid chain; its full sequence is H/ACA ribonucleoprotein complex subunit cbf5 (487 aa).

The Nucleophile role is filled by Asp101. The PUA domain maps to 273-348; it reads YKRIVVKDSA…VVAKVKRCIM (76 aa). Residues 400–410 are compositionally biased toward low complexity; that stretch reads EEASAHAASES. The tract at residues 400–487 is disordered; it reads EEASAHAASE…QEKEDSDDSD (88 aa). Basic and acidic residues predominate over residues 435-459; the sequence is MDVDETKEEKKRKRHEGETAEERAE. The span at 460 to 477 shows a compositional bias: basic residues; it reads RKRKKKEKKEKKERRKSK.

The protein belongs to the pseudouridine synthase TruB family. As to quaternary structure, component of the small nucleolar ribonucleoprotein particles containing H/ACA-type snoRNAs (H/ACA snoRNPs).

The protein resides in the nucleus. Its subcellular location is the nucleolus. The catalysed reaction is uridine in 5S rRNA = pseudouridine in 5S rRNA. The enzyme catalyses uridine in snRNA = pseudouridine in snRNA. It carries out the reaction a uridine in mRNA = a pseudouridine in mRNA. Its function is as follows. Catalytic subunit of H/ACA small nucleolar ribonucleoprotein (H/ACA snoRNP) complex, which catalyzes pseudouridylation of rRNA. This involves the isomerization of uridine such that the ribose is subsequently attached to C5, instead of the normal N1. Pseudouridine ('psi') residues may serve to stabilize the conformation of rRNAs and play a central role in ribosomal RNA processing. The H/ACA snoRNP complex also mediates pseudouridylation of other types of RNAs. Catalyzes pseudouridylation at position 93 in U2 snRNA. Also catalyzes pseudouridylation of mRNAs; H/ACA-type snoRNAs probably guide pseudouridylation of mRNAs. This chain is H/ACA ribonucleoprotein complex subunit cbf5 (cbf5), found in Aspergillus fumigatus (strain ATCC MYA-4609 / CBS 101355 / FGSC A1100 / Af293) (Neosartorya fumigata).